The following is a 339-amino-acid chain: MAVTPHHRLYEFAKTALIKIFAFPYATVCDLYCDGGVDTDKWGDAQIGHYIGIDASASGVNDARELWESRKKLFTSEFIELDPSADDFEAQMQEKGIQADIVCCMQHLQLCFESEEHAQKLLNNVSSLLKPGGYFVGIIPDSSTIWTKYQKNVEASHNKGLKTVPNSIRSENYVITFEVEEEKFPFFGKKYQLKFANESMFENHCLVHFPSFMRLAREAGLEYVEIQNLTEFYDDNRTQFAPLLGGYGSSLVDPRGKLVARSFDILGLYSTFVFQKPDPDAMPPIVTPELHDPENDQEEEWLWTQQASMDDGRVSRTDILPPADNEKGILGPGPADMRL.

One can recognise an mRNA cap 0 methyltransferase domain in the interval 1 to 277 (MAVTPHHRLY…LYSTFVFQKP (277 aa)). S-adenosyl-L-methionine-binding positions include lysine 14, aspartate 54, and 82-83 (DP). A disordered region spans residues 314–339 (VSRTDILPPADNEKGILGPGPADMRL).

It belongs to the class I-like SAM-binding methyltransferase superfamily. mRNA cap 0 methyltransferase family.

The protein resides in the nucleus. It catalyses the reaction a 5'-end (5'-triphosphoguanosine)-ribonucleoside in mRNA + S-adenosyl-L-methionine = a 5'-end (N(7)-methyl 5'-triphosphoguanosine)-ribonucleoside in mRNA + S-adenosyl-L-homocysteine. Its function is as follows. mRNA-capping methyltransferase that methylates the N7 position of the added guanosine to the 5'-cap structure of mRNAs. Binds RNA containing 5'-terminal GpppC. This Oryza sativa subsp. japonica (Rice) protein is mRNA cap guanine-N(7) methyltransferase 2.